The following is an 81-amino-acid chain: Dermaseptin-B2 (81 aa).

The first 22 residues, 1–22 (MAFLKKSLFLVLFLGLVSLSIC), serve as a signal peptide directing secretion. Residues 23–43 (EEEKRENEDEEEQEDDEQSEM) constitute a propeptide that is removed on maturation. The segment at 24 to 46 (EEKRENEDEEEQEDDEQSEMKRG) is disordered. A compositionally biased stretch (acidic residues) spans 30–40 (EDEEEQEDDEQ). The hinge region that separates the two alpha-helices that constitute the peptide stretch occupies residues 54-55 (VG). Residue V78 is modified to Valine amide. A propeptide spanning residues 80–81 (EQ) is cleaved from the precursor.

Post-translationally, amidation permits an increased antimicrobial activity against some microorganisms such as T.album and S.cerevisiae. In terms of processing, may contain a D-amino acid residue, since the natural peptide is not identical in chromatographic properties to the synthetic peptide. As to expression, expressed by the skin glands.

The protein resides in the secreted. The protein localises to the target cell membrane. Its function is as follows. Cationic amphipathic alpha-helical antimicrobial peptide with potent activity against Gram-negative and Gram-positive bacteria, fungi and protozoa. Acts in a synergistic effect in combination with Plasticin-B1 at doses that are not active alone. Acts by disturbing membrane functions. On model membranes, induces a strong perturbation of anionic lipid bilayers, resides at the hydrocarbon core-water interface, parallel to the plane of the membrane, and interacts preferentially with the polar head groups and glycerol backbone region of the anionic phospholipids, as well as the region of the lipid acyl chain near the bilayer surface. Induces a positive curvature of the bilayer and clustering of anionic lipids, consistent with a carpet mechanism, that may lead to the formation of mixed peptide-phospholipid toroidal, transient pores and membrane permeation/disruption once a threshold peptide accumulation is reached. Also enhances binding of agonists to adenosine A1 receptors (ADORA1), adenosine A2a receptors (ADORA2A), alpha-2 adrenergic receptors (ADRA2A) and 5-hydroxytryptamine 1A receptors (HTR1A). In addition, it enhances guanyl nucleotide exchange which may result in the conversion of receptors to a high affinity state complexed with guanyl nucleotide free G-protein. Affects human behavior eliciting profound malaise, followed by listlessness and then euphoria. Does not show cytotoxic activity on CHO cells. Does not act as a chemoattractant. Does not show hemolytic activity. The protein is Dermaseptin-B2 (ADR) of Phyllomedusa bicolor (Two-colored leaf frog).